We begin with the raw amino-acid sequence, 235 residues long: MKDELFKQSPKKQFEFDKSVASVFDDMINRSVPFYRENLELCGNLLAKILPTNASVCDLGCSSANFLIFLANLRKDFKLFGVDNSASMLEVAKSKAKAYGLDISFFEANLCEFDFFTCDVFVANYTMQFIRPPKRQELLDQIYKNLNSKGILIMSEKILYEDAFLSKNIIELYADYKEKQGYSKFEIAAKREALENVLIPYSQKENLNMLEKAGFKKIESIFKWANFETFIAFKD.

S-adenosyl-L-methionine is bound by residues Tyr35, 60–62 (GCS), 83–84 (DN), Asn124, and Arg191.

Belongs to the class I-like SAM-binding methyltransferase superfamily. Cx-SAM synthase family. As to quaternary structure, homodimer.

It catalyses the reaction prephenate + S-adenosyl-L-methionine = carboxy-S-adenosyl-L-methionine + 3-phenylpyruvate + H2O. Functionally, catalyzes the conversion of S-adenosyl-L-methionine (SAM) to carboxy-S-adenosyl-L-methionine (Cx-SAM). This chain is Carboxy-S-adenosyl-L-methionine synthase, found in Campylobacter jejuni subsp. jejuni serotype O:2 (strain ATCC 700819 / NCTC 11168).